A 168-amino-acid polypeptide reads, in one-letter code: NADH-ubiquinone oxidoreductase chain 6 (168 aa).

5 consecutive transmembrane segments (helical) span residues 1-21 (MKMM…VAFA), 27-47 (IYGG…VVSL), 50-70 (VFLG…VFGY), 87-107 (VVAF…YFMS), and 143-163 (WALA…LEVV).

It belongs to the complex I subunit 6 family. In terms of assembly, core subunit of respiratory chain NADH dehydrogenase (Complex I) which is composed of 45 different subunits.

It is found in the mitochondrion inner membrane. The enzyme catalyses a ubiquinone + NADH + 5 H(+)(in) = a ubiquinol + NAD(+) + 4 H(+)(out). Functionally, core subunit of the mitochondrial membrane respiratory chain NADH dehydrogenase (Complex I) which catalyzes electron transfer from NADH through the respiratory chain, using ubiquinone as an electron acceptor. Essential for the catalytic activity and assembly of complex I. The protein is NADH-ubiquinone oxidoreductase chain 6 (MT-ND6) of Didelphis virginiana (North American opossum).